Reading from the N-terminus, the 84-residue chain is Large ribosomal subunit protein bL27 (84 aa).

The tract at residues 1 to 21 is disordered; sequence MAHKKGGGSSKNGRDSQSKRL.

Belongs to the bacterial ribosomal protein bL27 family.

The chain is Large ribosomal subunit protein bL27 from Brachyspira hyodysenteriae (strain ATCC 49526 / WA1).